The primary structure comprises 204 residues: MSTQSTHPPKPEAPRLPPAISSCQRRHTLPASEFRCLTPEDAVSAFEIEREAFISVLGVCPLYLDEIRHFLTLCPELSLGWFEEGCLVAFIIGSLWDKDRLMQESLTMHRPGGHIAHLHVLAVHCAFRQQGRGPILLWRYLHHLGSQPAVHRAALMCEDALVPFYERFGFHAMGPCAITVGSLSFTELHCSLQGHPFLRRNSGC.

The residue at position 28 (threonine 28) is a Phosphothreonine; by PKA. Positions 32–193 (SEFRCLTPED…SFTELHCSLQ (162 aa)) constitute an N-acetyltransferase domain. Leucine 121 contributes to the substrate binding site. Acetyl-CoA contacts are provided by residues 121 to 123 (LAV) and 129 to 134 (QQGRGP). Methionine 156 is a binding site for substrate. 165–167 (YER) lines the acetyl-CoA pocket. Serine 202 carries the phosphoserine modification.

It belongs to the acetyltransferase family. AANAT subfamily. As to quaternary structure, monomer. Interacts with several 14-3-3 proteins, including YWHAB, YWHAE, YWHAG and YWHAZ, preferentially when phosphorylated at Thr-28. Phosphorylation on Ser-202 also allows binding to YWHAZ, but with lower affinity. The interaction with YWHAZ considerably increases affinity for arylalkylamines and acetyl-CoA and protects the enzyme from dephosphorylation and proteasomal degradation. It may also prevent thiol-dependent inactivation. Post-translationally, cAMP-dependent phosphorylation regulates AANAT activity by promoting interaction with 14-3-3 proteins. Phosphorylation levels exhibit night/day variations, with an increase during nighttime. Highly expressed in pineal gland and in the photoreceptor outer segments in the retina. Expressed at about 100-fold lower levels in the pituitary gland and testis. Not detected in other tissues.

It localises to the cytoplasm. It catalyses the reaction a 2-arylethylamine + acetyl-CoA = an N-acetyl-2-arylethylamine + CoA + H(+). It participates in aromatic compound metabolism; melatonin biosynthesis; melatonin from serotonin: step 1/2. Controls the night/day rhythm of melatonin production in the pineal gland. Catalyzes the N-acetylation of serotonin into N-acetylserotonin, the penultimate step in the synthesis of melatonin. The protein is Serotonin N-acetyltransferase (AANAT) of Macaca mulatta (Rhesus macaque).